A 359-amino-acid chain; its full sequence is Isopentenyl-diphosphate delta-isomerase (359 aa).

Position 11–12 (11–12 (RK)) interacts with substrate. FMN-binding positions include serine 68, 69–71 (GMT), serine 99, and asparagine 127. Residue 99 to 101 (SQR) coordinates substrate. Substrate is bound at residue glutamine 163. Glutamate 164 contributes to the Mg(2+) binding site. FMN-binding positions include lysine 199, threonine 229, 278–280 (GIR), and 299–300 (AL).

It belongs to the IPP isomerase type 2 family. Homooctamer. Dimer of tetramers. FMN is required as a cofactor. NADPH serves as cofactor. Requires Mg(2+) as cofactor.

It is found in the cytoplasm. It catalyses the reaction isopentenyl diphosphate = dimethylallyl diphosphate. Inhibited by 3,4-epoxy-3-methylbutyl diphosphate (EIPP). Functionally, involved in the biosynthesis of isoprenoids. Catalyzes the 1,3-allylic rearrangement of the homoallylic substrate isopentenyl (IPP) to its allylic isomer, dimethylallyl diphosphate (DMAPP). The protein is Isopentenyl-diphosphate delta-isomerase of Methanocaldococcus jannaschii (strain ATCC 43067 / DSM 2661 / JAL-1 / JCM 10045 / NBRC 100440) (Methanococcus jannaschii).